The primary structure comprises 1111 residues: NBPF family member NBPF9 (1111 aa).

The stretch at 70–130 (MLRNERQFKE…RSLNEHLQAL (61 aa)) forms a coiled coil. The tract at residues 161 to 198 (KLSPENDEDEDEDVQVEEDEKVLESSAPREVQKAEESK) is disordered. Over residues 165 to 181 (ENDEDEDEDVQVEEDEK) the composition is skewed to acidic residues. One can recognise an Olduvai 1 domain in the interval 165 to 259 (ENDEDEDEDV…ECQDALNILP (95 aa)). Residues 341–401 (MLRNERQFKE…RSLNEHLQAL (61 aa)) are a coiled coil. 8 Olduvai domains span residues 436 to 528 (ENDN…HIIP), 529 to 600 (ENES…VDIG), 601 to 692 (RHRW…PSCP), 695 to 750 (SREL…LDLD), 751 to 843 (RIKK…RSKK), 844 to 919 (KRRR…LDVD), 920 to 1012 (RIKK…RSKK), and 1013 to 1111 (ERRR…IFPQ). Disordered stretches follow at residues 451–474 (EKVQ…PEDS) and 510–569 (TLIG…STPS). Composition is skewed to acidic residues over residues 530 to 539 (NESDDEEEEE) and 550 to 562 (ESEE…ESWD). 2 disordered regions span residues 829–871 (KKGK…LDEK) and 999–1033 (KGKG…PRLN). Composition is skewed to basic residues over residues 831–849 (GKGK…RRGR) and 1000–1018 (GKGK…RRGR).

It belongs to the NBPF family. Expressed in a neuroblastoma cell line.

The protein resides in the cytoplasm. This Homo sapiens (Human) protein is NBPF family member NBPF9.